A 395-amino-acid polypeptide reads, in one-letter code: S-adenosylmethionine synthase (395 aa).

ATP is bound at residue H14. D16 contacts Mg(2+). Residue E42 coordinates K(+). L-methionine-binding residues include E55 and Q98. The flexible loop stretch occupies residues 98–108; sequence QSPDIAMGVDK. ATP contacts are provided by residues 175–177, 242–243, D251, 257–258, A274, and K278; these read DGK, RF, and RK. D251 is an L-methionine binding site. Residue K282 coordinates L-methionine.

It belongs to the AdoMet synthase family. As to quaternary structure, homotetramer; dimer of dimers. It depends on Mg(2+) as a cofactor. K(+) is required as a cofactor.

It localises to the cytoplasm. It carries out the reaction L-methionine + ATP + H2O = S-adenosyl-L-methionine + phosphate + diphosphate. It functions in the pathway amino-acid biosynthesis; S-adenosyl-L-methionine biosynthesis; S-adenosyl-L-methionine from L-methionine: step 1/1. In terms of biological role, catalyzes the formation of S-adenosylmethionine (AdoMet) from methionine and ATP. The overall synthetic reaction is composed of two sequential steps, AdoMet formation and the subsequent tripolyphosphate hydrolysis which occurs prior to release of AdoMet from the enzyme. The sequence is that of S-adenosylmethionine synthase from Thermosipho melanesiensis (strain DSM 12029 / CIP 104789 / BI429).